The following is a 2603-amino-acid chain: Ankyrin repeat domain-containing protein 17 (2603 aa).

Met1 carries the N-acetylmethionine modification. Composition is skewed to low complexity over residues 1-34 (MEKATVPVAAATAAEGEGSPPAVAAVAGPPAAAE) and 42-53 (SSRARSASSPRG). Positions 1–143 (MEKATVPVAA…SFILDQDDLE (143 aa)) are disordered. Residues Ser19 and Ser50 each carry the phosphoserine modification. The segment covering 63 to 79 (KKKPPQQQHHKAKRNRT) has biased composition (basic residues). Low complexity predominate over residues 84-94 (SSSESSSDSDN). Over residues 95-111 (SGGGGGGGGGGGGGGGT) the composition is skewed to gly residues. A compositionally biased stretch (acidic residues) spans 116-131 (SEEEEDDDDEEEEVSE). Ser156 carries the post-translational modification Phosphoserine. ANK repeat units lie at residues 233–262 (SDNRSLAEACSEGDVNAVRKLLIEGRSVNE), 266–295 (EGESLLCLACSAGYYELAQVLLAMHANVED), 300–329 (GDITPLMAAANGGHVKIVKLLLAHKADVNA), 333–362 (TGNTALTYACAGGYVDVVKVLLESGASIED), 366–395 (NGHTPLMEAGSAGHVEVARLLLENGAGINT), 400–429 (FKESALTLACYKGHLEMVRFLLEAGADQEH), 433–462 (EMHTALMEACMDGHVEVARLLLDSGAQVNM), 466–495 (SFESPLTLAACGGHVELAALLIERGASLEE), 499–528 (EGYTPLMEAAREGHEEMVALLLGQGANINA), 533–562 (TQETALTLACCGGFLEVADFLIKAGADIEL), 563–592 (GCSTPLMEAAQEGHLELVKYLLAAGANVHA), 596–625 (TGDTALTYACENGHTDVADVLLQAGADLEH), 629–658 (GGRTPLMKAARAGHVCTVQFLISKGANVNR), 663–692 (NDHTVLSLACAGGHLAVVELLLAHGADPTH), and 696–725 (DGSTMLIEAAKGGHTSVVCYLLDYPNNLLS). Lys318 is covalently cross-linked (Glycyl lysine isopeptide (Lys-Gly) (interchain with G-Cter in SUMO2)). Position 803 is a phosphoserine (Ser803). 10 ANK repeats span residues 1082–1111 (NHDTALTLACAGGHEELVQTLLERGASIEH), 1115–1144 (KGFTPLILAATAGHVGVVEILLDNGADIEA), 1149–1178 (TKDTPLSLACSGGRQEVVELLLARGANKEH), 1182–1211 (SDYTPLSLAASGGYVNIIKILLNAGAEINS), 1217–1246 (LGISPLMLAAMNGHTAAVKLLLDMGSDINA), 1251–1280 (NRNTALTLACFQGRTEVVSLLLDRKANVEH), 1284–1313 (TGLTPLMEAASGGYAEVGRVLLDKGADVNA), 1319–1348 (SRDTALTIAADKGHYKFCELLIGRGAHIDV), 1352–1381 (KGNTPLWLAANGGHLDVVQLLVQAGADVDA), and 1385–1414 (RKITPLMAAFRKGHVKVVRYLVKEVNQFPS). The stretch at 1442-1526 (VQAKDRQAAE…EKEKLKVEDE (85 aa)) forms a coiled coil. Ser1457 bears the Phosphoserine mark. 2 disordered regions span residues 1479–1500 (AKREKRKEKRRKKKEEQRRKLE) and 1517–1717 (EKEK…QKRE). Basic residues predominate over residues 1481–1491 (REKRKEKRRKK). 3 stretches are compositionally biased toward low complexity: residues 1531-1550 (TEPPSATTTTTIGISATWTT), 1602-1611 (ESKSSSTSES), and 1620-1632 (SSCSDESSNSNSS). Ser1635 and Ser1639 each carry phosphoserine. Composition is skewed to polar residues over residues 1642 to 1652 (VVTTTVSSKKQ) and 1675 to 1703 (LSETISEGTSNSLSTCTKSGPSPLSSPNG). Phosphoserine occurs at positions 1696, 1700, and 1709. In terms of domain architecture, KH spans 1725–1789 (RRSKKVSVPS…ESTRQATQLI (65 aa)). An Asymmetric dimethylarginine modification is found at Arg1874. 3 disordered regions span residues 1906 to 1995 (PRLP…PSVR), 2011 to 2192 (TTVT…HKNS), and 2273 to 2332 (VVSS…YGSV). 2 stretches are compositionally biased toward low complexity: residues 1950–1995 (SNQN…PSVR) and 2011–2028 (TTVTTTASNNNTAPTNAT). 6 positions are modified to phosphoserine: Ser2042, Ser2044, Ser2045, Ser2047, Ser2059, and Ser2067. Over residues 2066–2078 (ASPNKVASSSEQE) the composition is skewed to polar residues. Low complexity predominate over residues 2095-2106 (SSSSSGSSSAHS). 2 stretches are compositionally biased toward polar residues: residues 2107-2127 (NQQQPPGSVSQEPRPPLQQSQ) and 2273-2303 (VVSSQSTPESMLSGKSSYLPNSDPLHQSDTS). A compositionally biased stretch (pro residues) spans 2308–2318 (FRPPLQRPAPS). Ser2373 and Ser2401 each carry phosphoserine. Positions 2381–2423 (CSSASNDSSAQSVSSGVRAPSPAPSSVPLGSEKPSNVSQDRKV) are disordered. The span at 2382–2411 (SSASNDSSAQSVSSGVRAPSPAPSSVPLGS) shows a compositional bias: low complexity.

In terms of assembly, interacts (via N-terminus) with NOD2. Interacts with CDK2, MCM3, MCM5, MCM7, CDC6 and PCNA. Interacts with MAVS and IFIH1. Interacts (via the second ankyrin repeat cluster) with DDX58. (Microbial infection) Interacts with enterovirus 71/EV71 capsid protein VP1. Post-translationally, phosphorylated by CDK2. As to expression, ubiquitously expressed.

The protein resides in the cytoplasm. Its subcellular location is the nucleus. Could play pivotal roles in cell cycle and DNA regulation. Involved in innate immune defense against viruse by positively regulating the viral dsRNA receptors DDX58 and IFIH1 signaling pathways. Involves in NOD2- and NOD1-mediated responses to bacteria suggesting a role in innate antibacterial immune pathways too. Target of enterovirus 71 which is the major etiological agent of HFMD (hand, foot and mouth disease). Could play a central role for the formation and/or maintenance of the blood vessels of the circulation system. The chain is Ankyrin repeat domain-containing protein 17 (ANKRD17) from Homo sapiens (Human).